The sequence spans 139 residues: Small ribosomal subunit protein uS12m (139 aa).

Residues M1–S29 constitute a mitochondrion transit peptide. The disordered stretch occupies residues M36–R56.

The protein belongs to the universal ribosomal protein uS12 family. As to quaternary structure, component of the mitochondrial ribosome small subunit (28S) which comprises a 12S rRNA and about 30 distinct proteins.

It is found in the mitochondrion. This is Small ribosomal subunit protein uS12m (MRPS12) from Pongo abelii (Sumatran orangutan).